The chain runs to 282 residues: Bis(5'-nucleosyl)-tetraphosphatase, symmetrical (282 aa).

The protein belongs to the Ap4A hydrolase family.

It carries out the reaction P(1),P(4)-bis(5'-adenosyl) tetraphosphate + H2O = 2 ADP + 2 H(+). Its function is as follows. Hydrolyzes diadenosine 5',5'''-P1,P4-tetraphosphate to yield ADP. This Escherichia fergusonii (strain ATCC 35469 / DSM 13698 / CCUG 18766 / IAM 14443 / JCM 21226 / LMG 7866 / NBRC 102419 / NCTC 12128 / CDC 0568-73) protein is Bis(5'-nucleosyl)-tetraphosphatase, symmetrical.